The chain runs to 178 residues: Large ribosomal subunit protein uL6 (178 aa).

This sequence belongs to the universal ribosomal protein uL6 family. Part of the 50S ribosomal subunit.

This protein binds to the 23S rRNA, and is important in its secondary structure. It is located near the subunit interface in the base of the L7/L12 stalk, and near the tRNA binding site of the peptidyltransferase center. This is Large ribosomal subunit protein uL6 from Corynebacterium jeikeium (strain K411).